Reading from the N-terminus, the 544-residue chain is MAKDIYFNEDARKSLLSGIEKLSNAVKVTLGPKGRNVLIDKKFGSPTVTKDGVSVAREIELDNALENMGAQLLKEVAIKTNDLAGDGTTTATVLAYAIAREGLKNVSSGINPIGIKKGIEHAVTLASEKIRKSAKKITTKEEIAQVASISANNDTSIGEKIAEAMDRVGKDGVITVEESKTFDTTISYVEGMQFDRGYLSPYFSTNKENMSVSFDDAYILICEKKISTIKELLPVLEKVLNTNKPLLIIAEDIEGDALAALVLNSVRGALKVCAIKAPGFGDRRKAMLEDIAILTGGVFVSEELGLTLENVELEQLGQAKSVKVDKDNTTIINTGNKEQIKERAELIKKQIEETSSEYDKEKLQERLAKLVGGVAVINVGAVTELELKEKKHRVEDALSATRAAVEEGVVPGGGSTLIEVAMYLDTVDTSKLSYEEKQGFEIVKRSLEEPMRQIIANAGFESSIYIHQIKTDKKGLGFDAASFKWVNMIESGIIDPAKVTRSALQNAASIAGLLLTTECAITEVKEEKSNAGGGYPMDPGMGMM.

ATP is bound by residues 29–32, Lys-50, 86–90, Gly-413, 479–481, and Asp-495; these read TLGP, DGTTT, and DAA.

This sequence belongs to the chaperonin (HSP60) family. In terms of assembly, forms a cylinder of 14 subunits composed of two heptameric rings stacked back-to-back. Interacts with the co-chaperonin GroES.

The protein resides in the cytoplasm. The catalysed reaction is ATP + H2O + a folded polypeptide = ADP + phosphate + an unfolded polypeptide.. Its function is as follows. Together with its co-chaperonin GroES, plays an essential role in assisting protein folding. The GroEL-GroES system forms a nano-cage that allows encapsulation of the non-native substrate proteins and provides a physical environment optimized to promote and accelerate protein folding. This is Chaperonin GroEL from Borrelia turicatae (strain 91E135).